The sequence spans 377 residues: 3-dehydroquinate synthase (377 aa).

Residues 113-117 (GVIGD), 137-138 (TT), Lys150, Lys159, and 177-180 (FLDT) each bind NAD(+). Zn(2+)-binding residues include Glu192, His254, and His273.

It belongs to the sugar phosphate cyclases superfamily. Dehydroquinate synthase family. Co(2+) serves as cofactor. The cofactor is Zn(2+). Requires NAD(+) as cofactor.

Its subcellular location is the cytoplasm. The enzyme catalyses 7-phospho-2-dehydro-3-deoxy-D-arabino-heptonate = 3-dehydroquinate + phosphate. It functions in the pathway metabolic intermediate biosynthesis; chorismate biosynthesis; chorismate from D-erythrose 4-phosphate and phosphoenolpyruvate: step 2/7. Functionally, catalyzes the conversion of 3-deoxy-D-arabino-heptulosonate 7-phosphate (DAHP) to dehydroquinate (DHQ). This chain is 3-dehydroquinate synthase, found in Bartonella quintana (strain Toulouse) (Rochalimaea quintana).